The sequence spans 113 residues: uncharacterized protein (113 aa).

It belongs to the HesB/IscA family.

This is an uncharacterized protein from Synechocystis sp. (strain ATCC 27184 / PCC 6803 / Kazusa).